The chain runs to 424 residues: Translation initiation factor 2 subunit gamma (424 aa).

The 198-residue stretch at Leu23–Glu220 folds into the tr-type G domain. The tract at residues Gly32–Thr39 is G1. 4 residues coordinate Mg(2+): Asp35, Thr39, Gly60, and Ser62. Asp35–Thr40 contributes to the GTP binding site. A G2 region spans residues Gly60–Lys64. Positions Asp107–Gly110 are G3. GTP is bound by residues Asn163–Asp166 and Ser198–Gln200. Residues Asn163 to Asp166 are G4. Residues Ser198 to Gln200 form a G5 region.

The protein belongs to the TRAFAC class translation factor GTPase superfamily. Classic translation factor GTPase family. EIF2G subfamily. Heterotrimer composed of an alpha, a beta and a gamma chain. Mg(2+) serves as cofactor.

It carries out the reaction GTP + H2O = GDP + phosphate + H(+). In terms of biological role, eIF-2 functions in the early steps of protein synthesis by forming a ternary complex with GTP and initiator tRNA. The protein is Translation initiation factor 2 subunit gamma of Archaeoglobus fulgidus (strain ATCC 49558 / DSM 4304 / JCM 9628 / NBRC 100126 / VC-16).